A 196-amino-acid polypeptide reads, in one-letter code: Calmodulin-like protein 4 (196 aa).

The disordered stretch occupies residues M1 to R43. Residues F17 to E27 show a composition bias toward basic and acidic residues. Over residues G29–S39 the composition is skewed to polar residues. EF-hand domains follow at residues D51–S86, P87–Q122, D124–K159, and L160–D195.

This sequence belongs to the calmodulin family. Interacts with MYO7B; the interaction mediates the association of CALML4 with the IMAC/intermicrovillar adhesion complex. Interacts with MYO7A. As to expression, expressed in the intestinal tract. In terms of tissue distribution, dominant transcript in the intestinal tract.

The protein localises to the cell projection. It localises to the microvillus. Its function is as follows. As part of the intermicrovillar adhesion complex/IMAC plays a role in epithelial brush border differentiation, controlling microvilli organization and length. Acts as a light chain for MYO7B and is required for efficient targeting of the IMAC to the tips of border brush microvilli. The sequence is that of Calmodulin-like protein 4 from Homo sapiens (Human).